Consider the following 287-residue polypeptide: Large ribosomal subunit protein uL5m (287 aa).

A mitochondrion-targeting transit peptide spans 1 to 18 (MLGIRKNIRISVNFLQRR). Residues 80-89 (DEHTQKDRLP) show a composition bias toward basic and acidic residues. The disordered stretch occupies residues 80–109 (DEHTQKDRLPRWIGDNPYYKNRPPQKMRGN).

Belongs to the universal ribosomal protein uL5 family. Component of the mitochondrial large ribosomal subunit (mt-LSU). Mature yeast 74S mitochondrial ribosomes consist of a small (37S) and a large (54S) subunit. The 37S small subunit contains a 15S ribosomal RNA (15S mt-rRNA) and at least 32 different proteins. The 54S large subunit contains a 21S rRNA (21S mt-rRNA) and at least 45 different proteins. Unlike bacterial L5, uL5m does not bind zinc.

The protein localises to the mitochondrion. In terms of biological role, component of the mitochondrial ribosome (mitoribosome), a dedicated translation machinery responsible for the synthesis of mitochondrial genome-encoded proteins, including at least some of the essential transmembrane subunits of the mitochondrial respiratory chain. The mitoribosomes are attached to the mitochondrial inner membrane and translation products are cotranslationally integrated into the membrane. This Schizosaccharomyces pombe (strain 972 / ATCC 24843) (Fission yeast) protein is Large ribosomal subunit protein uL5m (mrpl7).